The primary structure comprises 181 residues: MLQALLIFVLQIIYVPVLTIRTILLVKNQTRSAAGVGLLEGAIYIISLGIVFQDLSNWMNIVAYIIGFSAGLLLGGYIENKLAIGYITYHVSLLDRCNELVDELRNAGFGVTLFEGEGINSVRYRLDIVAKRSREQELLEIVNRIAPKAFMSSYEIRSFKGGYLTKAMKKRTLMKKKDHAS.

3 consecutive transmembrane segments (helical) span residues Leu-6–Val-26, Ser-32–Phe-52, and Trp-58–Ile-78.

It belongs to the UPF0316 family.

It is found in the cell membrane. The chain is UPF0316 protein Bcer98_2136 from Bacillus cytotoxicus (strain DSM 22905 / CIP 110041 / 391-98 / NVH 391-98).